We begin with the raw amino-acid sequence, 349 residues long: Ribosomal RNA small subunit methyltransferase H 2 (349 aa).

S-adenosyl-L-methionine-binding positions include 80 to 82 (GGH), aspartate 100, phenylalanine 130, aspartate 149, and glutamine 156.

Belongs to the methyltransferase superfamily. RsmH family.

Its subcellular location is the cytoplasm. It carries out the reaction cytidine(1402) in 16S rRNA + S-adenosyl-L-methionine = N(4)-methylcytidine(1402) in 16S rRNA + S-adenosyl-L-homocysteine + H(+). In terms of biological role, specifically methylates the N4 position of cytidine in position 1402 (C1402) of 16S rRNA. In Alkaliphilus metalliredigens (strain QYMF), this protein is Ribosomal RNA small subunit methyltransferase H 2.